A 206-amino-acid chain; its full sequence is Cytochrome c oxidase assembly protein CtaG (206 aa).

Topologically, residues 1-17 are cytoplasmic; that stretch reads MPEVQPSALPKPAPRLG. Residues 18 to 40 form a helical; Signal-anchor for type II membrane protein membrane-spanning segment; that stretch reads RDAAVASICGFVVALMVGASFAA. At 41 to 206 the chain is on the periplasmic side; sequence VPFYDWFCRT…GEPDQRKGNL (166 aa).

Belongs to the COX11/CtaG family.

The protein localises to the cell inner membrane. Exerts its effect at some terminal stage of cytochrome c oxidase synthesis, probably by being involved in the insertion of the copper B into subunit I. This chain is Cytochrome c oxidase assembly protein CtaG, found in Rhodopseudomonas palustris (strain BisB5).